The chain runs to 289 residues: UTP--glucose-1-phosphate uridylyltransferase 2 (289 aa).

This sequence belongs to the UDPGP type 2 family.

It catalyses the reaction alpha-D-glucose 1-phosphate + UTP + H(+) = UDP-alpha-D-glucose + diphosphate. Its pathway is glycolipid metabolism; diglucosyl-diacylglycerol biosynthesis. In terms of biological role, catalyzes the formation of UDP-glucose from glucose-1-phosphate and UTP. This is an intermediate step in the biosynthesis of diglucosyl-diacylglycerol (Glc2-DAG), i.e. a glycolipid found in the membrane, which is also used as a membrane anchor for lipoteichoic acid (LTA). This is UTP--glucose-1-phosphate uridylyltransferase 2 (gtaB2) from Staphylococcus saprophyticus subsp. saprophyticus (strain ATCC 15305 / DSM 20229 / NCIMB 8711 / NCTC 7292 / S-41).